The chain runs to 654 residues: Endoplasmic reticulum chaperone BiP (654 aa).

The N-terminal stretch at 1 to 18 is a signal peptide; sequence MKFPMVAAALLLLCAVRA. Residues 1–80 are required for interaction with ELAPOR1; it reads MKFPMVAAAL…EGERLIGDAA (80 aa). 36–39 provides a ligand contact to ATP; it reads GTTY. Ser86 is subject to Phosphoserine. Position 96 (Lys96) interacts with ATP. Lys125 bears the N6-acetyllysine mark. Residues 125–280 are nucleotide-binding (NBD); it reads KPYIQVDIGG…KKKTGKDVRK (156 aa). Tyr160 bears the 3'-nitrotyrosine mark. Residue Lys213 is modified to N6-acetyllysine. 227–229 contributes to the ATP binding site; sequence GGT. Position 271 is an N6-acetyllysine (Lys271). Residue 293-300 coordinates ATP; sequence EKAKRALS. N6-acetyllysine is present on Lys326. Lys352 participates in a covalent cross-link: Glycyl lysine isopeptide (Lys-Gly) (interchain with G-Cter in SUMO2). Lys353 is modified (N6-acetyllysine; alternate). Lys353 participates in a covalent cross-link: Glycyl lysine isopeptide (Lys-Gly) (interchain with G-Cter in SUMO1); alternate. 364-367 contributes to the ATP binding site; it reads GSTR. The tract at residues 409–419 is interdomain linker; the sequence is QDTGDLVLLDV. The substrate-binding (SBD) stretch occupies residues 420–500; that stretch reads CPLTLGIETV…PRGVPQIEVT (81 aa). Lys447 carries the N6-succinyllysine modification. Arg492 is modified (omega-N-methylarginine). Thr518 carries the post-translational modification O-AMP-threonine; alternate. The residue at position 518 (Thr518) is a Phosphothreonine; alternate. An N6,N6,N6-trimethyllysine; by METTL21A; in vitro modification is found at Lys585. Residue Lys585 is modified to N6,N6-dimethyllysine; alternate. An N6-methyllysine; alternate modification is found at Lys585. Lys591 carries the post-translational modification N6-methyllysine. The segment at 632 to 654 is disordered; the sequence is SKLYGSAGPPPTGEEDTSEKDEL. Thr643 and Thr648 each carry phosphothreonine. Acidic residues predominate over residues 644–654; it reads GEEDTSEKDEL. Ser649 carries the post-translational modification Phosphoserine. The Prevents secretion from ER signature appears at 651 to 654; it reads KDEL.

It belongs to the heat shock protein 70 family. In terms of assembly, monomer and homooligomer; homooligomerization via the interdomain linker inactivates the chaperone activity and acts as a storage of HSPA5/BiP molecules. Interacts with DNAJC1 (via J domain). Component of an EIF2 complex at least composed of CELF1/CUGBP1, CALR, CALR3, EIF2S1, EIF2S2, HSP90B1 and HSPA5. Part of a large chaperone multiprotein complex comprising DNAJB11, HSP90B1, HSPA5, HYOU, PDIA2, PDIA4, PDIA6, PPIB, SDF2L1, UGGT1 and very small amounts of ERP29, but not, or at very low levels, CALR nor CANX. Interacts with TMEM132A and TRIM21. May form a complex with ERLEC1, OS9, SEL1L and SYVN1. Interacts with DNAJC10. Interacts with DNAJB9/ERdj4; leading to recruit HSPA5/BiP to ERN1/IRE1. Interacts with ERN1/IRE1 (via luminal domain); the interaction takes place following interaction with DNAJB9/ERdj4 and leads to inactivate ERN1/IRE1, the interaction also competitively inhibits ERN1 interaction with MANF. Interacts directly with MANF (via SAP domain); the interaction inhibits ATP binding to HSPA5/BiP and subsequent nucleotide exchange. Interacts with EIF2AK3/PERK (via luminal domain); interaction leads to inactivate EIF2AK3/PERK. Interacts with MX1. Interacts with METTL23. Interacts with CEMIP; the interaction induces calcium leakage from the endoplasmic reticulum and cell migration. Interacts with PCSK4 form; the interaction takes place in the endoplasmic reticulum. Interacts with CIPC. Interacts with CCDC88B (via C-terminus); the interaction opposes ERN1-mediated JNK activation, protecting against apoptosis. Interacts with INPP5K; necessary for INPP5K localization at the endoplasmic reticulum. Interacts with LOXL2; leading to activate the ERN1/IRE1-XBP1 pathway of the unfolded protein response. Interacts with CLU under stressed condition; interaction increases CLU protein stability; facilitates its retrotranslocation and redistribution to the mitochondria; cooperatively suppress stress-induced apoptosis by stabilizing mitochondrial membrane integrity. Interacts with CCDC47. Interacts with CLN3. Interacts with ELAPOR1; may regulate the function of HSPA5 in apoptosis and cell proliferation. Interacts with CASP7. Interacts with ILDR2; the interaction stabilizes ILDR2 expression. Interacts with ADAM7. In terms of processing, in unstressed cells, AMPylation at Thr-518 by FICD inactivates the chaperome activity: AMPylated form is locked in a relatively inert state and only weakly stimulated by J domain-containing proteins. In response to endoplasmic reticulum stress, de-AMPylation by the same protein, FICD, restores the chaperone activity.

The protein localises to the endoplasmic reticulum lumen. It is found in the melanosome. The protein resides in the cytoplasm. It localises to the cell surface. It catalyses the reaction ATP + H2O = ADP + phosphate + H(+). Its activity is regulated as follows. The chaperone activity is regulated by ATP-induced allosteric coupling of the nucleotide-binding (NBD) and substrate-binding (SBD) domains. In the ADP-bound and nucleotide-free (apo) states, the two domains have little interaction. In contrast, in the ATP-bound state the two domains are tightly coupled, which results in drastically accelerated kinetics in both binding and release of polypeptide substrates. J domain-containing co-chaperones (DNAJB9/ERdj4 or DNAJC10/ERdj5) stimulate the ATPase activity and are required for efficient substrate recognition by HSPA5/BiP. Homooligomerization inactivates participating HSPA5/BiP protomers and probably act as reservoirs to store HSPA5/BiP molecules when they are not needed by the cell. Endoplasmic reticulum chaperone that plays a key role in protein folding and quality control in the endoplasmic reticulum lumen. Involved in the correct folding of proteins and degradation of misfolded proteins via its interaction with DNAJC10/ERdj5, probably to facilitate the release of DNAJC10/ERdj5 from its substrate. Acts as a key repressor of the EIF2AK3/PERK and ERN1/IRE1-mediated unfolded protein response (UPR). In the unstressed endoplasmic reticulum, recruited by DNAJB9/ERdj4 to the luminal region of ERN1/IRE1, leading to disrupt the dimerization of ERN1/IRE1, thereby inactivating ERN1/IRE1. Also binds and inactivates EIF2AK3/PERK in unstressed cells. Accumulation of misfolded protein in the endoplasmic reticulum causes release of HSPA5/BiP from ERN1/IRE1 and EIF2AK3/PERK, allowing their homodimerization and subsequent activation. Plays an auxiliary role in post-translational transport of small presecretory proteins across endoplasmic reticulum (ER). May function as an allosteric modulator for SEC61 channel-forming translocon complex, likely cooperating with SEC62 to enable the productive insertion of these precursors into SEC61 channel. Appears to specifically regulate translocation of precursors having inhibitory residues in their mature region that weaken channel gating. May also play a role in apoptosis and cell proliferation. This is Endoplasmic reticulum chaperone BiP from Cricetulus griseus (Chinese hamster).